Reading from the N-terminus, the 223-residue chain is Pyridoxal phosphate homeostasis protein (223 aa).

At Lys36 the chain carries N6-(pyridoxal phosphate)lysine.

It belongs to the pyridoxal phosphate-binding protein YggS/PROSC family. As to quaternary structure, monomer.

Pyridoxal 5'-phosphate (PLP)-binding protein, which is involved in PLP homeostasis. This Buchnera aphidicola subsp. Baizongia pistaciae (strain Bp) protein is Pyridoxal phosphate homeostasis protein.